The following is a 322-amino-acid chain: Acetyl-coenzyme A carboxylase carboxyl transferase subunit alpha 2 (322 aa).

The 258-residue stretch at 37–294 (EINRLSARSE…KRVLQESLRN (258 aa)) folds into the CoA carboxyltransferase C-terminal domain.

It belongs to the AccA family. In terms of assembly, acetyl-CoA carboxylase is a heterohexamer composed of biotin carboxyl carrier protein (AccB), biotin carboxylase (AccC) and two subunits each of ACCase subunit alpha (AccA) and ACCase subunit beta (AccD).

The protein localises to the cytoplasm. The enzyme catalyses N(6)-carboxybiotinyl-L-lysyl-[protein] + acetyl-CoA = N(6)-biotinyl-L-lysyl-[protein] + malonyl-CoA. It participates in lipid metabolism; malonyl-CoA biosynthesis; malonyl-CoA from acetyl-CoA: step 1/1. In terms of biological role, component of the acetyl coenzyme A carboxylase (ACC) complex. First, biotin carboxylase catalyzes the carboxylation of biotin on its carrier protein (BCCP) and then the CO(2) group is transferred by the carboxyltransferase to acetyl-CoA to form malonyl-CoA. Confers resistance to the endogenous polyketide antibiotic thailandamide. Can replace the endogenous gene in S.typhimurium, conferring slow growth and resistance to thailandamide. Can also replace the endogenous gene in E.coli, conferring resistance to thailandamide. The chain is Acetyl-coenzyme A carboxylase carboxyl transferase subunit alpha 2 from Burkholderia thailandensis (strain ATCC 700388 / DSM 13276 / CCUG 48851 / CIP 106301 / E264).